A 431-amino-acid chain; its full sequence is Histidinol dehydrogenase (431 aa).

NAD(+) contacts are provided by Tyr130, Gln191, and Asn214. Substrate contacts are provided by Ser237, Gln259, and His262. Zn(2+) contacts are provided by Gln259 and His262. Residues Glu327 and His328 each act as proton acceptor in the active site. Residues His328, Asp361, Glu415, and His420 each contribute to the substrate site. Asp361 is a binding site for Zn(2+). His420 contacts Zn(2+).

The protein belongs to the histidinol dehydrogenase family. Zn(2+) is required as a cofactor.

The catalysed reaction is L-histidinol + 2 NAD(+) + H2O = L-histidine + 2 NADH + 3 H(+). The protein operates within amino-acid biosynthesis; L-histidine biosynthesis; L-histidine from 5-phospho-alpha-D-ribose 1-diphosphate: step 9/9. Catalyzes the sequential NAD-dependent oxidations of L-histidinol to L-histidinaldehyde and then to L-histidine. This chain is Histidinol dehydrogenase, found in Bradyrhizobium diazoefficiens (strain JCM 10833 / BCRC 13528 / IAM 13628 / NBRC 14792 / USDA 110).